A 211-amino-acid chain; its full sequence is Thymidylate kinase (211 aa).

7 to 14 (GMDGSGKT) contributes to the ATP binding site.

This sequence belongs to the thymidylate kinase family.

The catalysed reaction is dTMP + ATP = dTDP + ADP. In terms of biological role, phosphorylation of dTMP to form dTDP in both de novo and salvage pathways of dTTP synthesis. The polypeptide is Thymidylate kinase (Mesoplasma florum (strain ATCC 33453 / NBRC 100688 / NCTC 11704 / L1) (Acholeplasma florum)).